We begin with the raw amino-acid sequence, 103 residues long: Large ribosomal subunit protein uL24 (103 aa).

This sequence belongs to the universal ribosomal protein uL24 family. Part of the 50S ribosomal subunit.

Functionally, one of two assembly initiator proteins, it binds directly to the 5'-end of the 23S rRNA, where it nucleates assembly of the 50S subunit. Its function is as follows. One of the proteins that surrounds the polypeptide exit tunnel on the outside of the subunit. The polypeptide is Large ribosomal subunit protein uL24 (Glaesserella parasuis serovar 5 (strain SH0165) (Haemophilus parasuis)).